A 605-amino-acid chain; its full sequence is Elongation factor 4 (605 aa).

Residues 9-192 (NRIRNFCIIA…AIVQRIPAPA (184 aa)) form the tr-type G domain. GTP is bound by residues 21–26 (DHGKST) and 139–142 (NKID).

Belongs to the TRAFAC class translation factor GTPase superfamily. Classic translation factor GTPase family. LepA subfamily.

The protein resides in the cell inner membrane. It carries out the reaction GTP + H2O = GDP + phosphate + H(+). Required for accurate and efficient protein synthesis under certain stress conditions. May act as a fidelity factor of the translation reaction, by catalyzing a one-codon backward translocation of tRNAs on improperly translocated ribosomes. Back-translocation proceeds from a post-translocation (POST) complex to a pre-translocation (PRE) complex, thus giving elongation factor G a second chance to translocate the tRNAs correctly. Binds to ribosomes in a GTP-dependent manner. The sequence is that of Elongation factor 4 from Pelodictyon phaeoclathratiforme (strain DSM 5477 / BU-1).